The following is a 78-amino-acid chain: Small venom protein 2 (78 aa).

Positions 1-19 (MKFIVLLGALLALLVAVSA) are cleaved as a signal peptide. Positions 20–42 (DRIAREAPEMESVDEAVLTRQAR) are excised as a propeptide.

As to expression, expressed by the venom gland.

The protein localises to the secreted. In Pimpla hypochondriaca (Parasitoid wasp), this protein is Small venom protein 2.